The chain runs to 562 residues: Solute carrier family 22 member 6 (562 aa).

At 1-15 the chain is on the cytoplasmic side; the sequence is MPFSELLEQVGSTGR. A helical transmembrane segment spans residues 16–36; sequence FQVLHVTLLCIPVLMMASHNL. Topologically, residues 37–147 are extracellular; sequence LQNFVATVPS…LVCDMHSFKQ (111 aa). A helical transmembrane segment spans residues 148–168; sequence MGQTIYMGGVLVGALLFGGLS. At 169 to 174 the chain is on the cytoplasmic side; it reads DRYGRR. The chain crosses the membrane as a helical span at residues 175 to 195; it reads ILLLISNLLMAVSGTCAAFSS. Topologically, residues 196-205 are extracellular; sequence SFSLFCVFRF. The chain crosses the membrane as a helical span at residues 206–226; the sequence is GCGLALSGLGLNTFSLIVEWI. At 227–235 the chain is on the cytoplasmic side; sequence PTRIRTAVG. A helical membrane pass occupies residues 236–256; that stretch reads TTTGYCYTLGQLILVLLAYFI. Residues 257 to 260 lie on the Extracellular side of the membrane; it reads RDWR. The chain crosses the membrane as a helical span at residues 261–281; that stretch reads WLTLAVSLPFYVFFLIAWWFH. The Cytoplasmic segment spans residues 282 to 351; sequence ESSRWLALSN…FNTPAMRKRT (70 aa). The chain crosses the membrane as a helical span at residues 352 to 372; sequence LCLSAVWLSTSFAYYGLAMDL. At 373–378 the chain is on the extracellular side; the sequence is DKFGVD. The helical transmembrane segment at 379–399 threads the bilayer; sequence IYLIQVIFGAVDIPAKVVVVV. The Cytoplasmic portion of the chain corresponds to 400-408; the sequence is SMSLIGRRR. A helical transmembrane segment spans residues 409–429; the sequence is SQCAVLVVAGITILLNLLVPY. Residues 430-444 lie on the Extracellular side of the membrane; it reads DKQTIRTCLAVLGKG. Residues 445–465 form a helical membrane-spanning segment; sequence CLAASFNCCYLYSGELFPTII. At 466–468 the chain is on the cytoplasmic side; that stretch reads RQN. Residues 469-489 form a helical membrane-spanning segment; that stretch reads GMGWVSMMARIGAMVAPMVLL. Over 490 to 495 the chain is Extracellular; it reads TRDYIP. The helical transmembrane segment at 496–516 threads the bilayer; that stretch reads WLPGLIYGGAPILSGLAAIFL. At 517 to 562 the chain is on the cytoplasmic side; the sequence is PETLGYPLPDTIQDVEESGSGRKSKMSTKETITLQDKQANLLKQSA.

Belongs to the major facilitator (TC 2.A.1) superfamily. Organic cation transporter (TC 2.A.1.19) family. Post-translationally, glycosylated. Glycosylation is necessary for proper targeting of the transporter to the plasma membrane.

The protein resides in the cell membrane. The protein localises to the basolateral cell membrane. It localises to the basal cell membrane. Involved in the renal elimination of endogenous and exogenous organic anions. Functions as organic anion exchanger when the uptake of one molecule of organic anion is coupled with an efflux of one molecule of endogenous dicarboxylic acid (glutarate, ketoglutarate, etc). Mediates the sodium-independent uptake of p-aminohippurate (PAH), 2,3-dimercapto-1-propanesulfonic acid (DMPS), cidofovir, adefovir, 9-(2-phosphonylmethoxyethyl) guanine (PMEG), 9-(2-phosphonylmethoxyethyl) diaminopurine (PMEDAP), ochratoxin (OTA), acyclovir (ACV), 3'-azido-3-'deoxythymidine (AZT), cimetidine (CMD), 2,4-dichloro-phenoxyacetate (2,4-D), hippurate (HA), indoleacetate (IA), indoxyl sulfate (IS), 3-carboxy-4-methyl-5-propyl-2-furanpropionate (CMPF) and edaravone sulfate. Mediates the sodium-independent uptake of p-aminohippurate (PAH). PAH uptake is inhibited by p-chloromercuribenzenesulphonate (PCMBS), diethyl pyrocarbonate (DEPC), indomethacin, sulindac, diclofenac, carprofen, okadaic acid, benzothiazolylcysteine (BTC), S-chlorotrifluoroethylcysteine (CTFC), cysteine S-conjugates S-dichlorovinylcysteine (DCVC), furosemide, steviol, phorbol 12-myristate 13-acetate (PMA), calcium ionophore A23187, benzylpenicillin, bumetamide, losartan, probenecid, phenol red, urate, glutarate and alpha-ketoglutarate. PAH uptake is inhibited by glutarate. This chain is Solute carrier family 22 member 6 (SLC22A6), found in Pseudopleuronectes americanus (Winter flounder).